The sequence spans 610 residues: UvrABC system protein C (610 aa).

The GIY-YIG domain maps to 16–94; that stretch reads SQPGVYRMYD…IKLYQPRYNV (79 aa). A UVR domain is found at 204–239; that stretch reads QQVLHQLIERMENASKALNFEEAARIRDQIQAVRRV.

Belongs to the UvrC family. As to quaternary structure, interacts with UvrB in an incision complex.

The protein localises to the cytoplasm. Its function is as follows. The UvrABC repair system catalyzes the recognition and processing of DNA lesions. UvrC both incises the 5' and 3' sides of the lesion. The N-terminal half is responsible for the 3' incision and the C-terminal half is responsible for the 5' incision. The chain is UvrABC system protein C from Serratia proteamaculans (strain 568).